Here is a 349-residue protein sequence, read N- to C-terminus: Nuclear distribution protein nudE homolog 1-A (349 aa).

Residues valine 22 to lysine 189 are a coiled coil.

The protein belongs to the nudE family. As to quaternary structure, self-associates. Interacts with pafah1b1. In terms of processing, phosphorylated in mitosis.

The protein localises to the cytoplasm. Its subcellular location is the cytoskeleton. It is found in the microtubule organizing center. The protein resides in the centrosome. It localises to the spindle. The protein localises to the chromosome. Its subcellular location is the centromere. It is found in the kinetochore. The protein resides in the cleavage furrow. It localises to the cytoplasmic vesicle membrane. Its function is as follows. Required for centrosome duplication and formation and function of the mitotic spindle. This Xenopus laevis (African clawed frog) protein is Nuclear distribution protein nudE homolog 1-A (nde1-a).